We begin with the raw amino-acid sequence, 1383 residues long: DNA-directed RNA polymerase subunit beta'' (1383 aa).

Cysteine 220, cysteine 289, cysteine 296, and cysteine 299 together coordinate Zn(2+).

The protein belongs to the RNA polymerase beta' chain family. RpoC2 subfamily. In plastids the minimal PEP RNA polymerase catalytic core is composed of four subunits: alpha, beta, beta', and beta''. When a (nuclear-encoded) sigma factor is associated with the core the holoenzyme is formed, which can initiate transcription. Zn(2+) is required as a cofactor.

The protein resides in the plastid. It localises to the chloroplast. It carries out the reaction RNA(n) + a ribonucleoside 5'-triphosphate = RNA(n+1) + diphosphate. Its function is as follows. DNA-dependent RNA polymerase catalyzes the transcription of DNA into RNA using the four ribonucleoside triphosphates as substrates. In Oenothera elata subsp. hookeri (Hooker's evening primrose), this protein is DNA-directed RNA polymerase subunit beta''.